The chain runs to 362 residues: Lipoprotein p35 (362 aa).

The N-terminal stretch at 1–30 (MKIKKIKLLKALALTGAFGIVATVPVIVSS) is a signal peptide. Residue Cys31 is the site of N-palmitoyl cysteine attachment. A lipid anchor (S-diacylglycerol cysteine) is attached at Cys31. The interval 33 to 53 (STSENNGNGNGNGGTDGNTQQ) is disordered.

The protein belongs to the p35 lipoprotein family. In terms of processing, the N-terminus is blocked.

Its subcellular location is the cell membrane. In terms of biological role, major M.penetrans antigen. This is Lipoprotein p35 from Malacoplasma penetrans (strain HF-2) (Mycoplasma penetrans).